Here is a 319-residue protein sequence, read N- to C-terminus: MSLNFLDFEQPIAELEAKIDSLTAVSRQDEKLDINLDEEVQRLREKSVELTRKIFSDLGAWQIAQLARHPRRPYTLDYIANIFTDFEELAGDRAYADDKAIVGGIARLDGRPVMIIGHQKGRETKEKIRRNFGMPAPEGYRKALRLMEMAERFKLPIITFIDTPGAYPGVGAEERGQSEAIARNLREMSRLNVPIVCTVIGEGGSGGALAIGVGDKVNMLQYSTYSVISPEGCASILWKSADKAPLAAEAMGITAHRLKELKMIDSVIPEPLGGAHRDYAAIAISLKAQLLADLNDLDVLNDEELLNRRYQRLMNYGYC.

The CoA carboxyltransferase C-terminal domain occupies 35–296 (NLDEEVQRLR…KAQLLADLND (262 aa)).

It belongs to the AccA family. Acetyl-CoA carboxylase is a heterohexamer composed of biotin carboxyl carrier protein (AccB), biotin carboxylase (AccC) and two subunits each of ACCase subunit alpha (AccA) and ACCase subunit beta (AccD).

It is found in the cytoplasm. The enzyme catalyses N(6)-carboxybiotinyl-L-lysyl-[protein] + acetyl-CoA = N(6)-biotinyl-L-lysyl-[protein] + malonyl-CoA. It functions in the pathway lipid metabolism; malonyl-CoA biosynthesis; malonyl-CoA from acetyl-CoA: step 1/1. In terms of biological role, component of the acetyl coenzyme A carboxylase (ACC) complex. First, biotin carboxylase catalyzes the carboxylation of biotin on its carrier protein (BCCP) and then the CO(2) group is transferred by the carboxyltransferase to acetyl-CoA to form malonyl-CoA. This Yersinia pseudotuberculosis serotype O:3 (strain YPIII) protein is Acetyl-coenzyme A carboxylase carboxyl transferase subunit alpha.